Here is a 1098-residue protein sequence, read N- to C-terminus: Contactin-5 (1098 aa).

A signal peptide spans 1–23 (MASCWRLILFLSVTRWLSDYSEA). Ig-like C2-type domains are found at residues 98-189 (PVFV…ATLQ), 195-281 (NFSG…RVLS), 299-384 (PKIE…GQLQ), 389-473 (PHWV…AELK), 479-568 (PSFE…LSVK), and 570-659 (PTRI…DSVS). Cys-122 and Cys-172 are oxidised to a cystine. N-linked (GlcNAc...) asparagine glycosylation is found at Asn-137 and Asn-195. Intrachain disulfides connect Cys-216-Cys-268 and Cys-321-Cys-368. N-linked (GlcNAc...) asparagine glycosylation is found at Asn-396, Asn-448, and Asn-539. Disulfide bonds link Cys-410-Cys-457, Cys-502-Cys-550, and Cys-592-Cys-649. Fibronectin type-III domains lie at 672–770 (PPGV…TNEA), 775–872 (APSN…SAEG), 877–971 (APTD…TKRH), and 976–1066 (PPGN…SYSG). Asn-778, Asn-815, and Asn-930 each carry an N-linked (GlcNAc...) asparagine glycan. The segment at 956–982 (GYGPPSREASTTTKRHPPREPPGNLRW) is disordered. The N-linked (GlcNAc...) asparagine glycan is linked to Asn-1001. Ser-1071 carries the GPI-anchor amidated serine lipid modification. A propeptide spans 1072–1098 (AQSTLHSLSKWSSVTLLLALMLPSSSW) (removed in mature form).

Belongs to the immunoglobulin superfamily. Contactin family. Interacts with PTPRG. As to expression, expressed in the nervous system. Preferentially expressed in the central auditory pathways.

It localises to the cell membrane. Its function is as follows. Contactins mediate cell surface interactions during nervous system development. Has some neurite outgrowth-promoting activity in the cerebral cortical neurons but not in hippocampal neurons. Involved in neuronal activity in the auditory system. This chain is Contactin-5 (Cntn5), found in Mus musculus (Mouse).